Reading from the N-terminus, the 174-residue chain is MSFMLYLDKADFILSQPPPSNNQEKKKILKNRITNSFSLIMFSGNNCTYCQELKPIFKKLVGTIPNCQIGTVNVSLQPELAELSQQTTTPIRYVPLILFYINGTPFKEFGGNYTEDNLRQFVKEVSIKAYEIIGTPQQEEGSISQHSVGKAVSKRVCYLNFDNAYNGTPPPSFD.

This sequence belongs to the IIV-6 196R family.

This is an uncharacterized protein from Acheta domesticus (House cricket).